The following is a 349-amino-acid chain: Carbamoyl phosphate synthase small chain (349 aa).

A CPSase region spans residues 1–170; that stretch reads MKAKLILENG…KYEISGEGKK (170 aa). L-glutamine contacts are provided by Ser45, Gly218, and Gly220. In terms of domain architecture, Glutamine amidotransferase type-1 spans 170–349; it reads KVAIIDFGIK…IFDEFMKYAL (180 aa). Residue Cys245 is the Nucleophile of the active site. L-glutamine-binding residues include Leu246, Gln249, Asn287, Gly289, and Tyr290. Active-site residues include His327 and Glu329.

The protein belongs to the CarA family. As to quaternary structure, composed of two chains; the small (or glutamine) chain promotes the hydrolysis of glutamine to ammonia, which is used by the large (or ammonia) chain to synthesize carbamoyl phosphate. Tetramer of heterodimers (alpha,beta)4.

It carries out the reaction hydrogencarbonate + L-glutamine + 2 ATP + H2O = carbamoyl phosphate + L-glutamate + 2 ADP + phosphate + 2 H(+). The enzyme catalyses L-glutamine + H2O = L-glutamate + NH4(+). The protein operates within amino-acid biosynthesis; L-arginine biosynthesis; carbamoyl phosphate from bicarbonate: step 1/1. It participates in pyrimidine metabolism; UMP biosynthesis via de novo pathway; (S)-dihydroorotate from bicarbonate: step 1/3. Functionally, small subunit of the glutamine-dependent carbamoyl phosphate synthetase (CPSase). CPSase catalyzes the formation of carbamoyl phosphate from the ammonia moiety of glutamine, carbonate, and phosphate donated by ATP, constituting the first step of 2 biosynthetic pathways, one leading to arginine and/or urea and the other to pyrimidine nucleotides. The small subunit (glutamine amidotransferase) binds and cleaves glutamine to supply the large subunit with the substrate ammonia. The polypeptide is Carbamoyl phosphate synthase small chain (Clostridium perfringens (strain 13 / Type A)).